Consider the following 149-residue polypeptide: D-aminoacyl-tRNA deacylase (149 aa).

Positions 137–138 (GP) match the Gly-cisPro motif, important for rejection of L-amino acids motif.

Belongs to the DTD family. In terms of assembly, homodimer.

The protein resides in the cytoplasm. It carries out the reaction glycyl-tRNA(Ala) + H2O = tRNA(Ala) + glycine + H(+). The enzyme catalyses a D-aminoacyl-tRNA + H2O = a tRNA + a D-alpha-amino acid + H(+). In terms of biological role, an aminoacyl-tRNA editing enzyme that deacylates mischarged D-aminoacyl-tRNAs. Also deacylates mischarged glycyl-tRNA(Ala), protecting cells against glycine mischarging by AlaRS. Acts via tRNA-based rather than protein-based catalysis; rejects L-amino acids rather than detecting D-amino acids in the active site. By recycling D-aminoacyl-tRNA to D-amino acids and free tRNA molecules, this enzyme counteracts the toxicity associated with the formation of D-aminoacyl-tRNA entities in vivo and helps enforce protein L-homochirality. The sequence is that of D-aminoacyl-tRNA deacylase from Desulfotalea psychrophila (strain LSv54 / DSM 12343).